Here is a 697-residue protein sequence, read N- to C-terminus: Long-chain-fatty-acid--CoA ligase 6 (697 aa).

Residues 25–45 (LSATTLVSMGALAAILAYWLT) traverse the membrane as a helical; Signal-anchor for type III membrane protein segment. The Cytoplasmic portion of the chain corresponds to 46 to 697 (HRPKALQPPC…QIEELYSISM (652 aa)).

Belongs to the ATP-dependent AMP-binding enzyme family. Requires Mg(2+) as cofactor. In terms of tissue distribution, expressed predominantly in brain and, to a much lesser extent, in heart and adrenal.

It is found in the mitochondrion outer membrane. The protein localises to the peroxisome membrane. The protein resides in the microsome membrane. Its subcellular location is the endoplasmic reticulum membrane. The enzyme catalyses a long-chain fatty acid + ATP + CoA = a long-chain fatty acyl-CoA + AMP + diphosphate. It carries out the reaction (5Z,8Z,11Z,14Z)-eicosatetraenoate + ATP + CoA = (5Z,8Z,11Z,14Z)-eicosatetraenoyl-CoA + AMP + diphosphate. The catalysed reaction is 15-hydroxy-(5Z,8Z,11Z,13E)-eicosatetraenoate + ATP + CoA = 15-hydroxy-(5Z,8Z,11Z,13E)-eicosatetraenoyl-CoA + AMP + diphosphate. It catalyses the reaction 12-hydroxy-(5Z,8Z,10E,14Z)-eicosatetraenoate + ATP + CoA = 12-hydroxy-(5Z,8Z,10E,14Z)-eicosatetraenoyl-CoA + AMP + diphosphate. The enzyme catalyses 5-hydroxy-(6E,8Z,11Z,14Z)-eicosatetraenoate + ATP + CoA = 5-hydroxy-(6E,8Z,11Z,14Z)-eicosatetraenoyl-CoA + AMP + diphosphate. It carries out the reaction hexadecanoate + ATP + CoA = hexadecanoyl-CoA + AMP + diphosphate. The catalysed reaction is (E)-hexadec-2-enoate + ATP + CoA = (2E)-hexadecenoyl-CoA + AMP + diphosphate. In terms of biological role, catalyzes the conversion of long-chain fatty acids to their active form acyl-CoA for both synthesis of cellular lipids, and degradation via beta-oxidation. Plays an important role in fatty acid metabolism in brain and the acyl-CoAs produced may be utilized exclusively for the synthesis of the brain lipid. This chain is Long-chain-fatty-acid--CoA ligase 6, found in Rattus norvegicus (Rat).